The primary structure comprises 127 residues: Anti-adapter protein IraD (127 aa).

The protein belongs to the GpW/Gp25 family. IraD subfamily. In terms of assembly, interacts with RssB.

It localises to the cytoplasm. Functionally, inhibits RpoS proteolysis by regulating RssB activity, thereby increasing the stability of the sigma stress factor RpoS during oxidative stress. Its effect on RpoS stability is due to its interaction with RssB, which probably blocks the interaction of RssB with RpoS, and the consequent delivery of the RssB-RpoS complex to the ClpXP protein degradation pathway. The chain is Anti-adapter protein IraD from Escherichia coli O6:K15:H31 (strain 536 / UPEC).